Reading from the N-terminus, the 424-residue chain is N-succinylarginine dihydrolase (424 aa).

Substrate-binding positions include Ala-19–Ser-28, Asn-110, and His-137–Arg-138. Glu-174 is a catalytic residue. Arg-206 contacts substrate. Residue His-242 is part of the active site. Residues Asp-244 and Asn-351 each coordinate substrate. Cys-357 functions as the Nucleophile in the catalytic mechanism.

It belongs to the succinylarginine dihydrolase family. In terms of assembly, homodimer.

It catalyses the reaction N(2)-succinyl-L-arginine + 2 H2O + 2 H(+) = N(2)-succinyl-L-ornithine + 2 NH4(+) + CO2. Its pathway is amino-acid degradation; L-arginine degradation via AST pathway; L-glutamate and succinate from L-arginine: step 2/5. Its function is as follows. Catalyzes the hydrolysis of N(2)-succinylarginine into N(2)-succinylornithine, ammonia and CO(2). The chain is N-succinylarginine dihydrolase from Zymomonas mobilis subsp. mobilis (strain ATCC 31821 / ZM4 / CP4).